Reading from the N-terminus, the 344-residue chain is tRNA N6-adenosine threonylcarbamoyltransferase (344 aa).

2 residues coordinate Fe cation: H114 and H118. Substrate contacts are provided by residues 136–140, D170, G183, D187, and N278; that span reads LVSGG. D306 is a Fe cation binding site. Residues 325 to 344 are disordered; the sequence is PSPLDVPSDPGLPVMQGQVR.

It belongs to the KAE1 / TsaD family. Fe(2+) is required as a cofactor.

The protein localises to the cytoplasm. The enzyme catalyses L-threonylcarbamoyladenylate + adenosine(37) in tRNA = N(6)-L-threonylcarbamoyladenosine(37) in tRNA + AMP + H(+). Functionally, required for the formation of a threonylcarbamoyl group on adenosine at position 37 (t(6)A37) in tRNAs that read codons beginning with adenine. Is involved in the transfer of the threonylcarbamoyl moiety of threonylcarbamoyl-AMP (TC-AMP) to the N6 group of A37, together with TsaE and TsaB. TsaD likely plays a direct catalytic role in this reaction. The sequence is that of tRNA N6-adenosine threonylcarbamoyltransferase from Mycobacterium tuberculosis (strain ATCC 25177 / H37Ra).